The following is a 37-amino-acid chain: Delta-amaurobitoxin-Pl1b (37 aa).

Cystine bridges form between Cys-2–Cys-18, Cys-9–Cys-23, Cys-17–Cys-33, and Cys-25–Cys-31. Ser-37 carries the post-translational modification Serine amide.

The protein belongs to the neurotoxin 07 (Beta/delta-agtx) family. 02 (aga-3) subfamily. In terms of tissue distribution, expressed by the venom gland.

Its subcellular location is the secreted. Functionally, insecticidal toxin. Binds to site 4 of insect voltage-gated sodium channel (Nav) and inhibits channel inactivation. In vivo, it lethal to lepidopteran larvae. Has no adverse affects when intracerebroventricularly injected in mice at a dose of 0.2 ug, but causes reversible paralysis of legs when injected intracerebroventricularly in mice at a dose of 2.0 ug. In Pireneitega luctuosa (Tangled nest spider), this protein is Delta-amaurobitoxin-Pl1b.